The sequence spans 401 residues: MTEFPVVLVINCGSSSIKFSVLDAASCDCLLNGVAEGINAERAFLSLNGGEPVALAPRGYEGALQAIAGALAQRDLIDSVALIGHRVAHGGDLFTESVIISEEVINNIRQVSSLAPLHNYASLSGIASAQRLFPQVMQVAVFDTSFHQTLAPEAFLYGLPWEYYQNLGVRRYGFHGTSHRYVSRRALALLGLPEQESGLVIAHLGNGASICAVRNGRSVDTSMGMTPLEGLMMGTRSGDVDFGAMAWIAGETRQTLSDLERVANTASGLLGISGLSSDLRVLEQAWHEGHARARLAIKTFVHRIARHIAGHAAALQRLDGIIFTGGIGENSVLIRRLVSERLAVFGLEMDVARNQQPNSVGERLISADASRVRCAVIPTNEERMIALDAIRLGRIHTAALA.

ATP contacts are provided by asparagine 11 and lysine 18. Position 11 (asparagine 11) interacts with Mg(2+). Arginine 86 provides a ligand contact to substrate. Aspartate 143 serves as the catalytic Proton donor/acceptor. ATP-binding positions include histidine 175, 203–207 (HLGNG), 278–280 (DLR), and 326–330 (GIGEN).

Belongs to the acetokinase family. TdcD subfamily. Homodimer. The cofactor is Mg(2+).

It catalyses the reaction propanoate + ATP = propanoyl phosphate + ADP. Its pathway is amino-acid degradation; L-threonine degradation via propanoate pathway; propanoate from L-threonine: step 4/4. Functionally, catalyzes the conversion of propionyl phosphate and ADP to propionate and ATP. The protein is Propionate kinase of Klebsiella pneumoniae (strain 342).